Here is a 403-residue protein sequence, read N- to C-terminus: Endophilin-B2 (403 aa).

The membrane-binding amphipathic helix stretch occupies residues 1 to 27 (MDFNVKKLASDAGVFFSRAMQFTEEKL). The region spanning 24-287 (EEKLGQAEKT…LGRFSGTFVG (264 aa)) is the BAR domain. Positions 210 to 233 (WSDEVEKAEHELRLTQTEFDRQAE) form a coiled coil. In terms of domain architecture, SH3 spans 343–403 (SGTRKARVLY…VPVTYLELLS (61 aa)).

The protein belongs to the endophilin family. As to quaternary structure, homodimer, and heterodimer with SH3GLB1.

The protein resides in the cytoplasm. In Gallus gallus (Chicken), this protein is Endophilin-B2.